The following is a 145-amino-acid chain: CBS domain-containing protein DDB_G0289609 (145 aa).

2 consecutive CBS domains span residues 9–66 (MSKS…FLPE) and 84–141 (MKQN…LEPV).

This chain is CBS domain-containing protein DDB_G0289609, found in Dictyostelium discoideum (Social amoeba).